The sequence spans 213 residues: FMN-dependent NADH:quinone oxidoreductase 1 (213 aa).

S18–S20 contributes to the FMN binding site.

It belongs to the azoreductase type 1 family. As to quaternary structure, homodimer. It depends on FMN as a cofactor.

The enzyme catalyses 2 a quinone + NADH + H(+) = 2 a 1,4-benzosemiquinone + NAD(+). It catalyses the reaction N,N-dimethyl-1,4-phenylenediamine + anthranilate + 2 NAD(+) = 2-(4-dimethylaminophenyl)diazenylbenzoate + 2 NADH + 2 H(+). Its function is as follows. Quinone reductase that provides resistance to thiol-specific stress caused by electrophilic quinones. Functionally, also exhibits azoreductase activity. Catalyzes the reductive cleavage of the azo bond in aromatic azo compounds to the corresponding amines. This is FMN-dependent NADH:quinone oxidoreductase 1 from Bacillus cereus (strain ATCC 10987 / NRS 248).